Here is a 76-residue protein sequence, read N- to C-terminus: Vasotab-TY2 (76 aa).

The first 21 residues, 1-21 (MKFALFSVLVLMLIATFVAAD), serve as a signal peptide directing secretion. The Kazal-like domain occupies 22 to 76 (DCPRICTADYTPVCGTPSGGRRSANRTFANQCGLDSHNCLNKGATYDKLHDGECK). Intrachain disulfides connect C23–C60, C27–C53, and C35–C75.

In terms of tissue distribution, expressed by the salivary gland.

It is found in the secreted. Its function is as follows. Vasodilator protein that inhibits vasoconstriction of isolated rat femoral artery induced by phenylephrine. Since platelet aggregation and vasoconstriction are key hemostatic responses, particularly in small wounds, this protein likely participates in the antihemostatic responses during blood feeding. Blocks L-type calcium channels (Cav1/CACNA1) in left ventricular myocytes isolated from rat hearts. The sequence is that of Vasotab-TY2 from Tabanus yao (Horsefly).